The sequence spans 282 residues: NAD(P)H-hydrate epimerase (282 aa).

A mitochondrion-targeting transit peptide spans 1–53; sequence MSGLRTLLGLGLLVAGSRLPRIASRQSVCRAGPIWWGTQHRSSETMASAAVKY. The YjeF N-terminal domain maps to 59 to 269; sequence AQAVDEELFN…ALEKKYQLNL (211 aa). (6S)-NADPHX is bound at residue 113 to 117; the sequence is NNGGD. A K(+)-binding site is contributed by asparagine 114. Lysine 138 is modified (N6-succinyllysine). Aspartate 179 is a binding site for K(+). (6S)-NADPHX is bound by residues 183-189 and aspartate 212; that span reads GFSFKGD. Residue serine 215 coordinates K(+).

This sequence belongs to the NnrE/AIBP family. In terms of assembly, homodimer. Interacts with APOA1 and APOA2. K(+) is required as a cofactor. In terms of processing, undergoes physiological phosphorylation during sperm capacitation, downstream to PKA activation.

It is found in the mitochondrion. The protein resides in the secreted. The enzyme catalyses (6R)-NADHX = (6S)-NADHX. It catalyses the reaction (6R)-NADPHX = (6S)-NADPHX. Its function is as follows. Catalyzes the epimerization of the S- and R-forms of NAD(P)HX, a damaged form of NAD(P)H that is a result of enzymatic or heat-dependent hydration. This is a prerequisite for the S-specific NAD(P)H-hydrate dehydratase to allow the repair of both epimers of NAD(P)HX. Accelerates cholesterol efflux from endothelial cells to high-density lipoprotein (HDL) and thereby regulates angiogenesis. This is NAD(P)H-hydrate epimerase from Rattus norvegicus (Rat).